Reading from the N-terminus, the 437-residue chain is GTPase Der (437 aa).

EngA-type G domains are found at residues N3–V167 and P176–Q352. Residues G9–S16, D56–W60, N119–D122, G182–S189, D229–I233, and N294–D297 contribute to the GTP site. Positions I353–K437 constitute a KH-like domain.

The protein belongs to the TRAFAC class TrmE-Era-EngA-EngB-Septin-like GTPase superfamily. EngA (Der) GTPase family. Associates with the 50S ribosomal subunit.

In terms of biological role, GTPase that plays an essential role in the late steps of ribosome biogenesis. The chain is GTPase Der from Azobacteroides pseudotrichonymphae genomovar. CFP2.